The sequence spans 582 residues: PTS system lactose-specific EIICB component (582 aa).

The region spanning 8–409 (IEKGKPFFEK…VVDVIIYYPF (402 aa)) is the PTS EIIC type-3 domain. Transmembrane regions (helical) follow at residues 30 to 50 (GFIA…ITYV), 64 to 84 (GILM…VAGT), 103 to 123 (INFI…AADP), 137 to 157 (KGLL…NFFV), 176 to 196 (VFKD…LDLL), 222 to 242 (GWIG…VGIH), 283 to 303 (FVAT…FMWL), 339 to 359 (VFFI…KFFV), and 381 to 401 (IVMG…LIVV). Positions 453 to 473 (ASEADTDDTSSVDETTSTSST) are disordered. The span at 464–473 (VDETTSTSST) shows a compositional bias: low complexity. Residues 479 to 582 (QTNVLVLCAG…LEFVKQQFNN (104 aa)) form the PTS EIIB type-3 domain. C486 serves as the catalytic Phosphocysteine intermediate; for EIIB activity. C486 carries the phosphocysteine; by EIIA modification.

It is found in the cell membrane. The catalysed reaction is lactose(out) + N(pros)-phospho-L-histidyl-[protein] = lactose 6-phosphate(in) + L-histidyl-[protein]. Its function is as follows. The phosphoenolpyruvate-dependent sugar phosphotransferase system (sugar PTS), a major carbohydrate active transport system, catalyzes the phosphorylation of incoming sugar substrates concomitantly with their translocation across the cell membrane. The enzyme II LacEF PTS system is involved in lactose transport. The sequence is that of PTS system lactose-specific EIICB component from Staphylococcus epidermidis (strain ATCC 35984 / DSM 28319 / BCRC 17069 / CCUG 31568 / BM 3577 / RP62A).